The chain runs to 167 residues: Endoribonuclease YbeY (167 aa).

Zn(2+) contacts are provided by His-126, His-130, and His-136.

The protein belongs to the endoribonuclease YbeY family. Zn(2+) is required as a cofactor.

It localises to the cytoplasm. In terms of biological role, single strand-specific metallo-endoribonuclease involved in late-stage 70S ribosome quality control and in maturation of the 3' terminus of the 16S rRNA. The sequence is that of Endoribonuclease YbeY from Novosphingobium aromaticivorans (strain ATCC 700278 / DSM 12444 / CCUG 56034 / CIP 105152 / NBRC 16084 / F199).